The sequence spans 226 residues: Leucyl/phenylalanyl-tRNA--protein transferase (226 aa).

It belongs to the L/F-transferase family.

The protein localises to the cytoplasm. The enzyme catalyses N-terminal L-lysyl-[protein] + L-leucyl-tRNA(Leu) = N-terminal L-leucyl-L-lysyl-[protein] + tRNA(Leu) + H(+). The catalysed reaction is N-terminal L-arginyl-[protein] + L-leucyl-tRNA(Leu) = N-terminal L-leucyl-L-arginyl-[protein] + tRNA(Leu) + H(+). It catalyses the reaction L-phenylalanyl-tRNA(Phe) + an N-terminal L-alpha-aminoacyl-[protein] = an N-terminal L-phenylalanyl-L-alpha-aminoacyl-[protein] + tRNA(Phe). In terms of biological role, functions in the N-end rule pathway of protein degradation where it conjugates Leu, Phe and, less efficiently, Met from aminoacyl-tRNAs to the N-termini of proteins containing an N-terminal arginine or lysine. The sequence is that of Leucyl/phenylalanyl-tRNA--protein transferase from Pseudomonas fluorescens (strain Pf0-1).